We begin with the raw amino-acid sequence, 253 residues long: Small ribosomal subunit protein uS5 (253 aa).

A disordered region spans residues 1–30; sequence MAESAPRGFGRGGRGGRGRGRGRRGAKRDE. Residues 14–26 are compositionally biased toward basic residues; it reads RGGRGRGRGRRGA. The region spanning 75–138 is the S5 DRBM domain; sequence LNDEVMKVVP…IMGKLSIMPI (64 aa).

This sequence belongs to the universal ribosomal protein uS5 family. As to quaternary structure, component of the small ribosomal subunit (SSU). Mature yeast ribosomes consist of a small (40S) and a large (60S) subunit. The 40S small subunit contains 1 molecule of ribosomal RNA (18S rRNA) and at least 33 different proteins. The large 60S subunit contains 3 rRNA molecules (25S, 5.8S and 5S rRNA) and at least 46 different proteins. Interacts with snoRNA U3. Interacts with MPP10. Component of the ribosomal small subunit (SSU) processome composed of at least 40 protein subunits and snoRNA U3.

It is found in the cytoplasm. Its function is as follows. Component of the ribosome, a large ribonucleoprotein complex responsible for the synthesis of proteins in the cell. The small ribosomal subunit (SSU) binds messenger RNAs (mRNAs) and translates the encoded message by selecting cognate aminoacyl-transfer RNA (tRNA) molecules. The large subunit (LSU) contains the ribosomal catalytic site termed the peptidyl transferase center (PTC), which catalyzes the formation of peptide bonds, thereby polymerizing the amino acids delivered by tRNAs into a polypeptide chain. The nascent polypeptides leave the ribosome through a tunnel in the LSU and interact with protein factors that function in enzymatic processing, targeting, and the membrane insertion of nascent chains at the exit of the ribosomal tunnel. Plays a role in the assembly and function of the 40S ribosomal subunit. Mutations in this protein affects the control of translational fidelity. Involved in nucleolar processing of pre-18S ribosomal RNA and ribosome assembly. Functionally, component of the ribosome, a large ribonucleoprotein complex responsible for the synthesis of proteins in the cell. The small ribosomal subunit (SSU) binds messenger RNAs (mRNAs) and translates the encoded message by selecting cognate aminoacyl-transfer RNA (tRNA) molecules. The large subunit (LSU) contains the ribosomal catalytic site termed the peptidyl transferase center (PTC), which catalyzes the formation of peptide bonds, thereby polymerizing the amino acids delivered by tRNAs into a polypeptide chain. The nascent polypeptides leave the ribosome through a tunnel in the LSU and interact with protein factors that function in enzymatic processing, targeting, and the membrane insertion of nascent chains at the exit of the ribosomal tunnel. uS5 is important for the assembly and function of the 40S ribosomal subunit. Mutations in this protein affects the control of translational fidelity. Involved in nucleolar processing of pre-18S ribosomal RNA and ribosome assembly. This is Small ribosomal subunit protein uS5 (rps2) from Schizosaccharomyces pombe (strain 972 / ATCC 24843) (Fission yeast).